Consider the following 96-residue polypeptide: Large ribosomal subunit protein bL27 (96 aa).

The propeptide occupies 1-9 (MLRLDLQFF). Residues 13 to 35 (KGVGSTKNGRDSQSKRLGAKRAD) are disordered.

Belongs to the bacterial ribosomal protein bL27 family. In terms of processing, the N-terminus is cleaved by ribosomal processing cysteine protease Prp.

The chain is Large ribosomal subunit protein bL27 from Bacillus cereus (strain B4264).